Reading from the N-terminus, the 216-residue chain is Probable GH family 25 lysozyme 5 (216 aa).

A signal peptide spans 1–20 (MRFIISLLFVFTLIFNLAFS). A Ch-type lysozyme domain is found at 21–216 (HIGIDVSSGT…GLGIDKNYWE (196 aa)). Residue aspartate 25 is part of the active site. N-linked (GlcNAc...) asparagine glycosylation is present at asparagine 31. Catalysis depends on residues aspartate 113 and glutamate 115.

It belongs to the glycosyl hydrolase 25 family.

The protein localises to the secreted. The catalysed reaction is Hydrolysis of (1-&gt;4)-beta-linkages between N-acetylmuramic acid and N-acetyl-D-glucosamine residues in a peptidoglycan and between N-acetyl-D-glucosamine residues in chitodextrins.. The polypeptide is Probable GH family 25 lysozyme 5 (Dictyostelium discoideum (Social amoeba)).